The primary structure comprises 503 residues: Hemogen (503 aa).

Basic residues-rich tracts occupy residues 1 to 10 and 61 to 79; these read MDMGKGRPRL and KKRKYQRTGKGNKRGRKRQ. The segment at 1–129 is disordered; it reads MDMGKGRPRL…PLVPSPTKAV (129 aa). Positions 7–87 are necessary for nuclear localization; the sequence is RPRLKLPQMP…RQGNVEQKAE (81 aa). S90, S103, S124, S153, S158, S171, S213, S223, S228, S241, and S269 each carry phosphoserine. T286 is modified (phosphothreonine). Residues 381–503 are disordered; it reads QKTIQESPEP…ENGIYSSALF (123 aa). Over residues 385-396 the composition is skewed to low complexity; sequence QESPEPEQYSPE. 2 positions are modified to phosphoserine: S387 and S394. A compositionally biased stretch (basic and acidic residues) spans 426–436; it reads CQDREEPKHSL.

Expressed in hematopoietic precursor cells. Highly expressed in bone marrow, the red pulp of the spleen and round spermatids. Weakly expressed in peripheral blood cells.

Its subcellular location is the nucleus. Functionally, regulates the proliferation and differentiation of hematopoietic cells. Overexpression block the TPA-induced megakaryocytic differentiation in the K562 cell model. May also prevent cell apoptosis through the activation of the nuclear factor-kappa B (NF-kB). In Mus musculus (Mouse), this protein is Hemogen (Hemgn).